Reading from the N-terminus, the 427-residue chain is Pre-mRNA-splicing factor PRP46 (427 aa).

WD repeat units follow at residues 113 to 153 (GHHG…LKVT), 156 to 195 (AHDM…AIRN), 198 to 237 (GHLS…PVMT), 240 to 281 (GHKG…KVLT), 283 to 322 (HQRT…TNFV), 324 to 362 (QDLD…KYQT), and 373 to 412 (ESER…SQDT). A disordered region spans residues 404 to 427 (QDETASQDTHPNLPWNPKLDSQRL).

It belongs to the WD repeat PRL1/PRL2 family. As to quaternary structure, associated with the spliceosome.

Its subcellular location is the cytoplasm. The protein resides in the nucleus. In terms of biological role, involved in pre-mRNA splicing and required for cell cycle progression at G2/M. The chain is Pre-mRNA-splicing factor PRP46 (PRP46) from Candida glabrata (strain ATCC 2001 / BCRC 20586 / JCM 3761 / NBRC 0622 / NRRL Y-65 / CBS 138) (Yeast).